A 1342-amino-acid chain; its full sequence is DNA-directed RNA polymerase subunit beta (1342 aa).

Residues Lys1022 and Lys1200 each carry the N6-acetyllysine modification.

Belongs to the RNA polymerase beta chain family. In terms of assembly, the RNAP catalytic core consists of 2 alpha, 1 beta, 1 beta' and 1 omega subunit. When a sigma factor is associated with the core the holoenzyme is formed, which can initiate transcription.

The enzyme catalyses RNA(n) + a ribonucleoside 5'-triphosphate = RNA(n+1) + diphosphate. DNA-dependent RNA polymerase catalyzes the transcription of DNA into RNA using the four ribonucleoside triphosphates as substrates. This chain is DNA-directed RNA polymerase subunit beta, found in Escherichia fergusonii (strain ATCC 35469 / DSM 13698 / CCUG 18766 / IAM 14443 / JCM 21226 / LMG 7866 / NBRC 102419 / NCTC 12128 / CDC 0568-73).